Reading from the N-terminus, the 186-residue chain is UPF0398 protein BPUM_1952 (186 aa).

The protein belongs to the UPF0398 family.

The protein is UPF0398 protein BPUM_1952 of Bacillus pumilus (strain SAFR-032).